The following is a 452-amino-acid chain: Trigger factor (452 aa).

One can recognise a PPIase FKBP-type domain in the interval 171 to 256 (GDRVKVNFKG…ATAIETPEEK (86 aa)).

This sequence belongs to the FKBP-type PPIase family. Tig subfamily.

The protein resides in the cytoplasm. The catalysed reaction is [protein]-peptidylproline (omega=180) = [protein]-peptidylproline (omega=0). Its function is as follows. Involved in protein export. Acts as a chaperone by maintaining the newly synthesized protein in an open conformation. Functions as a peptidyl-prolyl cis-trans isomerase. In Bradyrhizobium sp. (strain BTAi1 / ATCC BAA-1182), this protein is Trigger factor.